The chain runs to 234 residues: Ubiquinone biosynthesis O-methyltransferase (234 aa).

Residues Arg39, Gly59, Asp80, and Met124 each contribute to the S-adenosyl-L-methionine site.

Belongs to the methyltransferase superfamily. UbiG/COQ3 family.

The catalysed reaction is a 3-demethylubiquinol + S-adenosyl-L-methionine = a ubiquinol + S-adenosyl-L-homocysteine + H(+). It catalyses the reaction a 3-(all-trans-polyprenyl)benzene-1,2-diol + S-adenosyl-L-methionine = a 2-methoxy-6-(all-trans-polyprenyl)phenol + S-adenosyl-L-homocysteine + H(+). The protein operates within cofactor biosynthesis; ubiquinone biosynthesis. In terms of biological role, O-methyltransferase that catalyzes the 2 O-methylation steps in the ubiquinone biosynthetic pathway. The chain is Ubiquinone biosynthesis O-methyltransferase from Aliivibrio fischeri (strain MJ11) (Vibrio fischeri).